The primary structure comprises 240 residues: UPF0173 metal-dependent hydrolase OE_2513F (240 aa).

Belongs to the UPF0173 family.

This chain is UPF0173 metal-dependent hydrolase OE_2513F, found in Halobacterium salinarum (strain ATCC 29341 / DSM 671 / R1).